Consider the following 463-residue polypeptide: Interferon-inducible GTPase 5 (463 aa).

The IRG-type G domain maps to 52 to 234 (TRLEVGVTGE…PMLVTTWEHD (183 aa)). GTP-binding positions include 61–68 (ESGAGKSS), 86–90 (TGVVE), 168–170 (KVD), and 215–217 (SNL). Phosphoserine is present on residues serine 246 and serine 303. Positions 409–438 (QGEVSLEAAGDNAVEKRSSGEGTSEEAPLS) are disordered.

The protein belongs to the TRAFAC class dynamin-like GTPase superfamily. IRG family.

Its subcellular location is the cell projection. The protein resides in the cilium. It localises to the flagellum. It is found in the lipid droplet. It catalyses the reaction GTP + H2O = GDP + phosphate + H(+). In terms of biological role, required for sperm motility and therefore male fertility, via positive regulation of spermatozoa fibrous sheath formation. The chain is Interferon-inducible GTPase 5 (Irgc) from Rattus norvegicus (Rat).